A 418-amino-acid chain; its full sequence is NADH-quinone oxidoreductase subunit D (418 aa).

It belongs to the complex I 49 kDa subunit family. NDH-1 is composed of 14 different subunits. Subunits NuoB, C, D, E, F, and G constitute the peripheral sector of the complex.

Its subcellular location is the cell inner membrane. It carries out the reaction a quinone + NADH + 5 H(+)(in) = a quinol + NAD(+) + 4 H(+)(out). In terms of biological role, NDH-1 shuttles electrons from NADH, via FMN and iron-sulfur (Fe-S) centers, to quinones in the respiratory chain. The immediate electron acceptor for the enzyme in this species is believed to be ubiquinone. Couples the redox reaction to proton translocation (for every two electrons transferred, four hydrogen ions are translocated across the cytoplasmic membrane), and thus conserves the redox energy in a proton gradient. The polypeptide is NADH-quinone oxidoreductase subunit D (Neisseria meningitidis serogroup C (strain 053442)).